The sequence spans 229 residues: Large ribosomal subunit protein uL1c (229 aa).

The protein belongs to the universal ribosomal protein uL1 family. In terms of assembly, part of the 50S ribosomal subunit.

It localises to the plastid. Its subcellular location is the chloroplast. Functionally, binds directly to 23S rRNA. Might be involved in E site tRNA release (Potential). The chain is Large ribosomal subunit protein uL1c (rpl1) from Porphyra purpurea (Red seaweed).